The sequence spans 898 residues: Chloride channel protein 2 (898 aa).

Residues 1-90 lie on the Cytoplasmic side of the membrane; that stretch reads MAAPAAAAVE…RCHKFLVSRV (90 aa). Residues 19 to 37 are essential for channel gating by both voltage and cell volume; sequence QYEQTLMYGRYTQDLGAFA. Thr23 is modified (phosphothreonine). The modulates channel gating by both voltage and cell volume stretch occupies residues 39–52; sequence EEAARIRLGGPEPW. A run of 2 helical transmembrane segments spans residues 91-124 and 133-158; these read GEDW…AQQW and LLLQ…TQIL. The Selectivity filter part_1 motif lies at 164 to 168; the sequence is GSGIP. An intramembrane region (helical) is located at residues 167–174; that stretch reads IPEMKTIL. Helical transmembrane passes span 183–201 and 208–226; these read LTLK…ALGS and EGPF…SKFL. The short motif at 206–210 is the Selectivity filter part_2 element; it reads GKEGP. 2 consecutive intramembrane regions (helical) follow at residues 242-254 and 258-266; these read MLAA…VGCC and PIGGVLFSI. 5 helical membrane passes run 278 to 298, 324 to 352, 361 to 380, 432 to 452, and 460 to 483; these read YWRG…LAVW, LPAF…VQVM, FLMR…ISTL, ANVF…SALA, and GAFM…MAAW. The Selectivity filter part_3 signature appears at 460-464; sequence GAFMP. Positions 500 to 514 form an intramembrane region, helical; it reads GGYAVVGAAALAGAV. Residues 515–516 constitute an intramembrane region (note=Loop between two helices); it reads TH. The helical intramembrane region spans 517–528; that stretch reads TVSTAVIVFELT. The segment at residues 529 to 533 is an intramembrane region (note=Loop between two helices); the sequence is GQIAH. A helical transmembrane segment spans residues 534–551; that stretch reads ILPVMIAVILANAVAQSL. Topologically, residues 552 to 898 are cytoplasmic; it reads QPSLYDSIIR…SPSDSDDKCQ (347 aa). In terms of domain architecture, CBS 1 spans 587–645; that stretch reads MVRDVPHVALSCTFRDLRLALHRTKGRTLALVESPESMILLGSIERTQVVALLAAQLSP. Basic residues predominate over residues 647–658; that stretch reads RRRQSKQKRRVA. The tract at residues 647–675 is disordered; the sequence is RRRQSKQKRRVAHTSPPSCQESPPSPETS. Ser710 is modified (phosphoserine). The tract at residues 726–766 is disordered; sequence FCGSPPPEAASESEKSESSEKRKSKRVRISLASDSDLEGEM. The span at 737 to 746 shows a compositional bias: basic and acidic residues; that stretch reads ESEKSESSEK. Ser758 carries the post-translational modification Phosphoserine. In terms of domain architecture, CBS 2 spans 790-850; it reads IDPAPFQLVE…GSVTAQGVKV (61 aa). The Basolateral membrane sorting signature appears at 812 to 813; that stretch reads LL. Positions 856–898 are disordered; it reads SFRDSATSSSDTETTEVHALWGPRSRHGLPREGSPSDSDDKCQ.

It belongs to the chloride channel (TC 2.A.49) family. ClC-2/CLCN2 subfamily. Homodimer. Interacts with auxiliary subunit HEPACAM. In terms of processing, phosphorylated. Activated by dephosphorylation. In terms of tissue distribution, ubiquitously expressed.

The protein localises to the cell membrane. The protein resides in the basolateral cell membrane. It localises to the cell projection. It is found in the dendritic spine membrane. Its subcellular location is the axon. The catalysed reaction is chloride(in) = chloride(out). It carries out the reaction thiocyanate(in) = thiocyanate(out). It catalyses the reaction bromide(in) = bromide(out). The enzyme catalyses nitrate(in) = nitrate(out). The catalysed reaction is iodide(out) = iodide(in). Its activity is regulated as follows. Common gate kinetics are down-regulated by intracellular ATP. Inhibited by AK-42, a derivative of meclofenamate. Inhibited by Cd(2+). Inhibited by Zn(2+) and PKC activation. Inhibited at acidic pH. CCLN2:HEPACAM channel conductance is up-regulated upon hypo-osmolarity. Voltage-gated and osmosensitive chloride channel. Forms a homodimeric channel where each subunit has its own ion conduction pathway. Conducts double-barreled currents controlled by two types of gates, two fast glutamate gates that control each subunit independently and a slow common gate that opens and shuts off both subunits simultaneously. Displays inward rectification currents activated upon membrane hyperpolarization and extracellular hypotonicity. Contributes to chloride conductance involved in neuron excitability. In hippocampal neurons, generates a significant part of resting membrane conductance and provides an additional chloride efflux pathway to prevent chloride accumulation in dendrites upon GABA receptor activation. In glia, associates with the auxiliary subunit HEPACAM/GlialCAM at astrocytic processes and myelinated fiber tracts where it may regulate transcellular chloride flux buffering extracellular chloride and potassium concentrations. Regulates aldosterone production in adrenal glands. The opening of CLCN2 channels at hyperpolarized membrane potentials in the glomerulosa causes cell membrane depolarization, activation of voltage-gated calcium channels and increased expression of aldosterone synthase, the rate-limiting enzyme for aldosterone biosynthesis. Contributes to chloride conductance in retinal pigment epithelium involved in phagocytosis of shed photoreceptor outer segments and photoreceptor renewal. Conducts chloride currents at the basolateral membrane of epithelial cells with a role in chloride reabsorption rather than secretion. Permeable to small monovalent anions with chloride &gt; thiocyanate &gt; bromide &gt; nitrate &gt; iodide ion selectivity. This chain is Chloride channel protein 2 (CLCN2), found in Oryctolagus cuniculus (Rabbit).